A 236-amino-acid polypeptide reads, in one-letter code: 2-C-methyl-D-erythritol 4-phosphate cytidylyltransferase (236 aa).

It belongs to the IspD/TarI cytidylyltransferase family. IspD subfamily. As to quaternary structure, homodimer.

The catalysed reaction is 2-C-methyl-D-erythritol 4-phosphate + CTP + H(+) = 4-CDP-2-C-methyl-D-erythritol + diphosphate. Its pathway is isoprenoid biosynthesis; isopentenyl diphosphate biosynthesis via DXP pathway; isopentenyl diphosphate from 1-deoxy-D-xylulose 5-phosphate: step 2/6. Its function is as follows. Catalyzes the formation of 4-diphosphocytidyl-2-C-methyl-D-erythritol from CTP and 2-C-methyl-D-erythritol 4-phosphate (MEP). This chain is 2-C-methyl-D-erythritol 4-phosphate cytidylyltransferase, found in Escherichia coli O139:H28 (strain E24377A / ETEC).